Here is a 224-residue protein sequence, read N- to C-terminus: Glutathione S-transferase U4 (224 aa).

The GST N-terminal domain maps to 6–85 (EDVKLLGFWA…YIDQIWKNNP (80 aa)). Glutathione contacts are provided by residues 16 to 17 (SP), 42 to 43 (NK), 56 to 57 (KV), and 69 to 70 (ES). The 128-residue stretch at 90 to 217 (DPYEKAMALF…EEQIEHMKKV (128 aa)) folds into the GST C-terminal domain. Residue threonine 151 is modified to Phosphothreonine.

Belongs to the GST superfamily. Tau family.

The protein resides in the cytoplasm. Its subcellular location is the cytosol. The enzyme catalyses RX + glutathione = an S-substituted glutathione + a halide anion + H(+). Its function is as follows. May be involved in the conjugation of reduced glutathione to a wide number of exogenous and endogenous hydrophobic electrophiles and have a detoxification role against certain herbicides. This chain is Glutathione S-transferase U4 (GSTU4), found in Arabidopsis thaliana (Mouse-ear cress).